Here is an 823-residue protein sequence, read N- to C-terminus: Translation initiation factor IF-2 (823 aa).

Disordered stretches follow at residues 30-66 and 156-192; these read VPPS…DDKR and TPSH…IKKV. Residues 36–48 are compositionally biased toward polar residues; it reads RGTSTGKSFTTVE. Residues 56–66 are compositionally biased toward basic and acidic residues; sequence PGEYISHDDKR. The 170-residue stretch at 322 to 491 folds into the tr-type G domain; sequence PRPPVVTVMG…LLLAEMLELS (170 aa). Residues 331 to 338 form a G1 region; that stretch reads GHVDHGKT. Residue 331–338 participates in GTP binding; sequence GHVDHGKT. The G2 stretch occupies residues 356 to 360; sequence GITQH. The G3 stretch occupies residues 377-380; sequence DTPG. GTP-binding positions include 377-381 and 431-434; these read DTPGH and NKID. Positions 431–434 are G4; it reads NKID. A G5 region spans residues 467 to 469; sequence SAK.

Belongs to the TRAFAC class translation factor GTPase superfamily. Classic translation factor GTPase family. IF-2 subfamily.

The protein localises to the cytoplasm. One of the essential components for the initiation of protein synthesis. Protects formylmethionyl-tRNA from spontaneous hydrolysis and promotes its binding to the 30S ribosomal subunits. Also involved in the hydrolysis of GTP during the formation of the 70S ribosomal complex. The sequence is that of Translation initiation factor IF-2 from Anaplasma phagocytophilum (strain HZ).